The following is a 132-amino-acid chain: Small ribosomal subunit protein uS8 (132 aa).

Belongs to the universal ribosomal protein uS8 family. Part of the 30S ribosomal subunit. Contacts proteins S5 and S12.

Functionally, one of the primary rRNA binding proteins, it binds directly to 16S rRNA central domain where it helps coordinate assembly of the platform of the 30S subunit. The sequence is that of Small ribosomal subunit protein uS8 from Kocuria rhizophila (strain ATCC 9341 / DSM 348 / NBRC 103217 / DC2201).